We begin with the raw amino-acid sequence, 73 residues long: Conotoxin CnIIIG (73 aa).

The signal sequence occupies residues 1 to 19 (MSKLGVLLTICLLLLPLTA). The propeptide occupies 20–48 (LPMDEDQPADQPADRMQDDISSEQYPLFD). Gln51 bears the Pyrrolidone carboxylic acid mark. Disulfide bonds link Cys53-Cys72, Cys54-Cys70, and Cys60-Cys73.

It belongs to the conotoxin M superfamily. In terms of tissue distribution, expressed by the venom duct.

It is found in the secreted. In terms of biological role, shows a paralytic effect in fish. The protein is Conotoxin CnIIIG of Conus consors (Singed cone).